The chain runs to 182 residues: Isopentenyl-diphosphate Delta-isomerase (182 aa).

Residues H25 and H32 each contribute to the Mn(2+) site. A Nudix hydrolase domain is found at 30-164 (LLHLAFSSWL…PWAFSPWMVM (135 aa)). The active site involves C67. Mn(2+) is bound at residue H69. A Mg(2+)-binding site is contributed by E87. 2 residues coordinate Mn(2+): E114 and E116. The active site involves E116.

This sequence belongs to the IPP isomerase type 1 family. In terms of assembly, homodimer. Mg(2+) is required as a cofactor. It depends on Mn(2+) as a cofactor.

It localises to the cytoplasm. It carries out the reaction isopentenyl diphosphate = dimethylallyl diphosphate. Its pathway is isoprenoid biosynthesis; dimethylallyl diphosphate biosynthesis; dimethylallyl diphosphate from isopentenyl diphosphate: step 1/1. Its function is as follows. Catalyzes the 1,3-allylic rearrangement of the homoallylic substrate isopentenyl (IPP) to its highly electrophilic allylic isomer, dimethylallyl diphosphate (DMAPP). This Escherichia coli (strain SMS-3-5 / SECEC) protein is Isopentenyl-diphosphate Delta-isomerase.